Reading from the N-terminus, the 471-residue chain is 3-isopropylmalate dehydratase large subunit (471 aa).

3 residues coordinate [4Fe-4S] cluster: cysteine 347, cysteine 407, and cysteine 410.

It belongs to the aconitase/IPM isomerase family. LeuC type 1 subfamily. As to quaternary structure, heterodimer of LeuC and LeuD. [4Fe-4S] cluster is required as a cofactor.

It catalyses the reaction (2R,3S)-3-isopropylmalate = (2S)-2-isopropylmalate. The protein operates within amino-acid biosynthesis; L-leucine biosynthesis; L-leucine from 3-methyl-2-oxobutanoate: step 2/4. Functionally, catalyzes the isomerization between 2-isopropylmalate and 3-isopropylmalate, via the formation of 2-isopropylmaleate. The protein is 3-isopropylmalate dehydratase large subunit of Edwardsiella ictaluri (strain 93-146).